Reading from the N-terminus, the 110-residue chain is MAPRGCIVAVFAIFCISRLLCSHGAPVAPMTPYLMLCQPHKRCGDKFYDPLQHCCYDDAVVPLARTQTCGNCTFRVCFEQCCPWTFMVKLINQNCDSARTSDDRLCRSVS.

Residues 1–24 form the signal peptide; it reads MAPRGCIVAVFAIFCISRLLCSHG. An N-linked (GlcNAc...) asparagine glycan is attached at Asn71.

This sequence belongs to the IGFL family. Homodimer; disulfide-linked. In terms of tissue distribution, detected in ovary and spinal cord.

Its subcellular location is the secreted. In terms of biological role, probable ligand of the IGFLR1 cell membrane receptor. This chain is Insulin growth factor-like family member 1 (IGFL1), found in Homo sapiens (Human).